Here is a 159-residue protein sequence, read N- to C-terminus: 2-C-methyl-D-erythritol 2,4-cyclodiphosphate synthase (159 aa).

A divalent metal cation-binding residues include D8 and H10. Residues 8 to 10 and 34 to 35 each bind 4-CDP-2-C-methyl-D-erythritol 2-phosphate; these read DSH and HS. Residue H42 coordinates a divalent metal cation. Residues 56-58, 61-65, F139, and R142 contribute to the 4-CDP-2-C-methyl-D-erythritol 2-phosphate site; these read DIG and FPDSD.

Belongs to the IspF family. Homotrimer. Requires a divalent metal cation as cofactor.

The enzyme catalyses 4-CDP-2-C-methyl-D-erythritol 2-phosphate = 2-C-methyl-D-erythritol 2,4-cyclic diphosphate + CMP. It functions in the pathway isoprenoid biosynthesis; isopentenyl diphosphate biosynthesis via DXP pathway; isopentenyl diphosphate from 1-deoxy-D-xylulose 5-phosphate: step 4/6. Its function is as follows. Involved in the biosynthesis of isopentenyl diphosphate (IPP) and dimethylallyl diphosphate (DMAPP), two major building blocks of isoprenoid compounds. Catalyzes the conversion of 4-diphosphocytidyl-2-C-methyl-D-erythritol 2-phosphate (CDP-ME2P) to 2-C-methyl-D-erythritol 2,4-cyclodiphosphate (ME-CPP) with a corresponding release of cytidine 5-monophosphate (CMP). The chain is 2-C-methyl-D-erythritol 2,4-cyclodiphosphate synthase from Syntrophus aciditrophicus (strain SB).